Reading from the N-terminus, the 307-residue chain is Acetaldehyde dehydrogenase (307 aa).

Ser12–Ile15 contributes to the NAD(+) binding site. Cys130 serves as the catalytic Acyl-thioester intermediate. NAD(+) is bound by residues Ser161–Asn169 and Asn272.

This sequence belongs to the acetaldehyde dehydrogenase family.

It catalyses the reaction acetaldehyde + NAD(+) + CoA = acetyl-CoA + NADH + H(+). The polypeptide is Acetaldehyde dehydrogenase (Shewanella halifaxensis (strain HAW-EB4)).